The following is a 304-amino-acid chain: Protein INO2 (304 aa).

A bHLH domain is found at valine 236–isoleucine 290.

Efficient DNA binding requires dimerization with another bHLH protein.

The protein localises to the nucleus. Functionally, positive regulatory factor required for depression of the coregulated phospholipid biosynthetic enzymes. Also involved in the expression of ITR1. The polypeptide is Protein INO2 (INO2) (Saccharomyces cerevisiae (strain ATCC 204508 / S288c) (Baker's yeast)).